The chain runs to 120 residues: PE family protein PE10 (120 aa).

The interval 29–59 (GQVTGNGGSGNSGTSAAAANPNSDNTASIAD) is disordered. Positions 40 to 51 (SGTSAAAANPNS) are enriched in low complexity.

This sequence belongs to the mycobacterial PE family. Forms a complex with PE9. The complex interacts with human TLR4.

It localises to the secreted. The protein resides in the cell wall. Its function is as follows. Together with PE9, induces macrophage apoptosis through human Toll-like receptor 4 (TLR4) signaling pathway. Interaction with TLR4 leads to increased levels of phospho-IRF-3, increase in the transcript levels of IFN-beta and pro-apoptotic genes, up-regulation of IL-10, down-regulation of IL-1b and enhanced levels of macrophage apoptosis. This Mycobacterium tuberculosis (strain ATCC 25618 / H37Rv) protein is PE family protein PE10.